Reading from the N-terminus, the 306-residue chain is Mitochondrial basic amino acids transporter (306 aa).

The next 6 membrane-spanning stretches (helical) occupy residues 2–22 (ALDF…GHPF), 61–81 (GLGS…GVQG), 96–116 (FLAG…MELA), 153–172 (GMVS…FLTY), 187–207 (LLVP…WLST), and 255–275 (LLRA…VLTY). 3 Solcar repeats span residues 2–86 (ALDF…TLRA), 90–178 (DSPL…MTRA), and 190–275 (PKLL…VLTY). The segment at 284–306 (DSEAALGTSPTPAGSALAQPSSL) is disordered. Residues 291 to 306 (TSPTPAGSALAQPSSL) show a composition bias toward polar residues.

This sequence belongs to the mitochondrial carrier (TC 2.A.29) family. Widely expressed, with highest levels in the brain, including cortex, cerebellum, hippocampus and hypothalamus, and moderate levels in liver, kidney, heart and testis.

It localises to the mitochondrion inner membrane. It carries out the reaction L-lysine(out) + L-arginine(in) = L-lysine(in) + L-arginine(out). The catalysed reaction is L-histidine(out) + L-arginine(in) = L-histidine(in) + L-arginine(out). It catalyses the reaction L-ornithine(in) + L-arginine(out) = L-ornithine(out) + L-arginine(in). The enzyme catalyses L-homoarginine(in) + L-arginine(out) = L-homoarginine(out) + L-arginine(in). It carries out the reaction N(omega)-methyl-L-arginine(in) + L-arginine(out) = N(omega)-methyl-L-arginine(out) + L-arginine(in). The catalysed reaction is L-arginine(in) = L-arginine(out). It catalyses the reaction L-lysine(in) = L-lysine(out). The enzyme catalyses L-ornithine(in) = L-ornithine(out). It carries out the reaction L-histidine(out) = L-histidine(in). Its function is as follows. Mitochondrial transporter of arginine, lysine, homoarginine, methylarginine. Transports with a much lesser extent, ornithine and histidine. Does not transport carnitine nor acylcarnitines. Functions by both counter-exchange and uniport mechanisms. Plays a physiological role in the import of basic amino acids into mitochondria for mitochondrial protein synthesis and amino acid degradation. The protein is Mitochondrial basic amino acids transporter (Slc25a29) of Mus musculus (Mouse).